The following is a 978-amino-acid chain: Exocyst complex component 5 (978 aa).

A compositionally biased stretch (polar residues) spans M1 to I11. Disordered stretches follow at residues M1–Q87 and T122–Y246. 2 stretches are compositionally biased toward low complexity: residues P36–T52 and S62–T86. The span at T122–K142 shows a compositional bias: polar residues. Residues P143 to P245 show a composition bias toward low complexity. Positions N303–E325 form a coiled coil.

This sequence belongs to the SEC10 family. The exocyst complex is composed of sec3/exoc1, sec5/exoc2, sec6/exoc3, sec8/exoc4, sec10/exoc5, sec15/exoc6, exo70/exoc7 and exo84/exoc8.

In terms of biological role, component of the exocyst complex involved in the docking of exocytic vesicles with fusion sites on the plasma membrane. This is Exocyst complex component 5 (exoc5) from Dictyostelium discoideum (Social amoeba).